The primary structure comprises 517 residues: Bifunctional purine biosynthesis protein PurH (517 aa).

The MGS-like domain occupies Met-1–Val-145.

Belongs to the PurH family.

The enzyme catalyses (6R)-10-formyltetrahydrofolate + 5-amino-1-(5-phospho-beta-D-ribosyl)imidazole-4-carboxamide = 5-formamido-1-(5-phospho-D-ribosyl)imidazole-4-carboxamide + (6S)-5,6,7,8-tetrahydrofolate. It carries out the reaction IMP + H2O = 5-formamido-1-(5-phospho-D-ribosyl)imidazole-4-carboxamide. It participates in purine metabolism; IMP biosynthesis via de novo pathway; 5-formamido-1-(5-phospho-D-ribosyl)imidazole-4-carboxamide from 5-amino-1-(5-phospho-D-ribosyl)imidazole-4-carboxamide (10-formyl THF route): step 1/1. It functions in the pathway purine metabolism; IMP biosynthesis via de novo pathway; IMP from 5-formamido-1-(5-phospho-D-ribosyl)imidazole-4-carboxamide: step 1/1. This Prochlorococcus marinus (strain MIT 9312) protein is Bifunctional purine biosynthesis protein PurH.